Here is a 210-residue protein sequence, read N- to C-terminus: uncharacterized protein (210 aa).

To E.coli YkgK.

This is an uncharacterized protein from Escherichia coli (strain K12).